The following is a 141-amino-acid chain: HTH-type transcriptional repressor NsrR (141 aa).

In terms of domain architecture, HTH rrf2-type spans 2–129; it reads QLTSFTDYGL…DNYTLADLVE (128 aa). The H-T-H motif DNA-binding region spans 28–51; the sequence is ISEVTDVYGVSRNHMVKIINQLSR. Cys91, Cys96, and Cys102 together coordinate [2Fe-2S] cluster.

It depends on [2Fe-2S] cluster as a cofactor.

Nitric oxide-sensitive repressor of genes involved in protecting the cell against nitrosative stress. May require iron for activity. The polypeptide is HTH-type transcriptional repressor NsrR (Escherichia coli O127:H6 (strain E2348/69 / EPEC)).